Consider the following 627-residue polypeptide: 5-aminolevulinate synthase, non-specific, mitochondrial (627 aa).

Residues 1–58 (MDVIVRRCPFLARVPQAFFQQSKKSLAVYAQRCPFMMELASKPMAPSLARALCSSSSS) constitute a mitochondrion transit peptide. 3 residues coordinate substrate: arginine 204, serine 321, and lysine 340. Pyridoxal 5'-phosphate is bound by residues serine 373, histidine 401, and threonine 429. Residue lysine 432 is part of the active site. Lysine 432 is subject to N6-(pyridoxal phosphate)lysine. Pyridoxal 5'-phosphate-binding residues include threonine 461 and threonine 462. Residue threonine 549 participates in substrate binding.

It belongs to the class-II pyridoxal-phosphate-dependent aminotransferase family. In terms of assembly, homodimer. Requires pyridoxal 5'-phosphate as cofactor.

The protein resides in the mitochondrion inner membrane. The catalysed reaction is succinyl-CoA + glycine + H(+) = 5-aminolevulinate + CO2 + CoA. Its pathway is porphyrin-containing compound metabolism; protoporphyrin-IX biosynthesis; 5-aminolevulinate from glycine: step 1/1. In terms of biological role, catalyzes the pyridoxal 5'-phosphate (PLP)-dependent condensation of succinyl-CoA and glycine to form aminolevulinic acid (ALA), with CoA and CO2 as by-products. This chain is 5-aminolevulinate synthase, non-specific, mitochondrial (alas1), found in Opsanus tau (Oyster toadfish).